We begin with the raw amino-acid sequence, 838 residues long: Urease (838 aa).

The region spanning 400–838 is the Urease domain; that stretch reads GAIDCHVHFI…VPLSRNYFLF (439 aa). Histidine 405, histidine 407, and lysine 488 together coordinate Ni(2+). The residue at position 488 (lysine 488) is an N6-carboxylysine. Histidine 490 provides a ligand contact to substrate. 2 residues coordinate Ni(2+): histidine 517 and histidine 543. Histidine 591 (proton donor) is an active-site residue. Aspartate 631 contacts Ni(2+).

The protein in the C-terminal section; belongs to the metallo-dependent hydrolases superfamily. Urease alpha subunit family. Homohexamer. Other oligomeric forms may exist depending on pH and presence of salts. Ni(2+) serves as cofactor. Post-translationally, carboxylation allows a single lysine to coordinate two nickel ions.

It catalyses the reaction urea + 2 H2O + H(+) = hydrogencarbonate + 2 NH4(+). It functions in the pathway nitrogen metabolism; urea degradation; CO(2) and NH(3) from urea (urease route): step 1/1. With respect to regulation, requires the three urease accessory proteins URED, UREF AND UREG for its activation. Urea hydrolase involved in nitrogen recycling from ureide, purine, and arginine catabolism. The sequence is that of Urease from Arabidopsis thaliana (Mouse-ear cress).